Reading from the N-terminus, the 212-residue chain is Protein GrpE (212 aa).

The tract at residues 1–68 (MAETSNNKTS…ELESAKKEIE (68 aa)) is disordered. Basic and acidic residues predominate over residues 9-30 (TSEEAKANEKKSQSETLEESKL). Low complexity predominate over residues 40–60 (ETTQTESMETAETETSLQTEL).

This sequence belongs to the GrpE family. In terms of assembly, homodimer.

It localises to the cytoplasm. In terms of biological role, participates actively in the response to hyperosmotic and heat shock by preventing the aggregation of stress-denatured proteins, in association with DnaK and GrpE. It is the nucleotide exchange factor for DnaK and may function as a thermosensor. Unfolded proteins bind initially to DnaJ; upon interaction with the DnaJ-bound protein, DnaK hydrolyzes its bound ATP, resulting in the formation of a stable complex. GrpE releases ADP from DnaK; ATP binding to DnaK triggers the release of the substrate protein, thus completing the reaction cycle. Several rounds of ATP-dependent interactions between DnaJ, DnaK and GrpE are required for fully efficient folding. The sequence is that of Protein GrpE from Leptospira interrogans serogroup Icterohaemorrhagiae serovar copenhageni (strain Fiocruz L1-130).